A 264-amino-acid polypeptide reads, in one-letter code: Tropinone reductase homolog At5g06060 (264 aa).

NADP(+) is bound at residue 15–39 (LVTGGTRGIGRAVVEELAKFGAKVH). Serine 148 contributes to the substrate binding site. The Proton acceptor role is filled by tyrosine 161.

The protein belongs to the short-chain dehydrogenases/reductases (SDR) family. SDR65C subfamily.

This is Tropinone reductase homolog At5g06060 from Arabidopsis thaliana (Mouse-ear cress).